The sequence spans 144 residues: Austinoid biosynthesis cluster protein S (144 aa).

The protein belongs to the trt14 isomerase family. Homodimer.

It functions in the pathway secondary metabolite biosynthesis; terpenoid biosynthesis. Its function is as follows. Part of the gene cluster that mediates the biosynthesis of calidodehydroaustin, a fungal meroterpenoid. The first step of the pathway is the synthesis of 3,5-dimethylorsellinic acid by the polyketide synthase ausA. 3,5-dimethylorsellinic acid is then prenylated by the polyprenyl transferase ausN. Further epoxidation by the FAD-dependent monooxygenase ausM and cyclization by the probable terpene cyclase ausL lead to the formation of protoaustinoid A. Protoaustinoid A is then oxidized to spiro-lactone preaustinoid A3 by the combined action of the FAD-binding monooxygenases ausB and ausC, and the dioxygenase ausE. Acid-catalyzed keto-rearrangement and ring contraction of the tetraketide portion of preaustinoid A3 by ausJ lead to the formation of preaustinoid A4. The aldo-keto reductase ausK, with the help of ausH, is involved in the next step by transforming preaustinoid A4 into isoaustinone which is in turn hydroxylated by the P450 monooxygenase ausI to form austinolide. The cytochrome P450 monooxygenase ausG modifies austinolide to austinol. Austinol is further acetylated to austin by the O-acetyltransferase ausP, which spontaneously changes to dehydroaustin. The cytochrome P450 monooxygenase ausR then converts dehydroaustin is into 7-dehydrodehydroaustin. The hydroxylation catalyzed by ausR permits the O-acetyltransferase ausQ to add an additional acetyl group to the molecule, leading to the formation of acetoxydehydroaustin. The short chain dehydrogenase ausT catalyzes the reduction of the double bond present between carbon atoms 1 and 2 to convert 7-dehydrodehydroaustin into 1,2-dihydro-7-hydroxydehydroaustin. AusQ catalyzes not only an acetylation reaction but also the addition of the PKS ausV diketide product to 1,2-dihydro-7-hydroxydehydroaustin, forming precalidodehydroaustin. Finally, the iron/alpha-ketoglutarate-dependent dioxygenase converts precalidodehydroaustin into calidodehydroaustin. AusS is necessary for austinoids production and may play a possible function as a regulator. In terms of biological role, may play a possible function as a regulator. In Aspergillus calidoustus, this protein is Austinoid biosynthesis cluster protein S.